The sequence spans 2217 residues: DNA polymerase epsilon catalytic subunit A (2217 aa).

Residues Cys-2104, Cys-2107, Cys-2126, and Cys-2129 each coordinate Zn(2+). A CysA-type zinc finger spans residues 2104 to 2129; it reads CEYCSYVSDLDLCRDGLDGKFQCPRC. The [4Fe-4S] cluster site is built by Cys-2160, Cys-2163, Cys-2175, and Cys-2177. Positions 2160-2177 match the CysB motif motif; it reads CEKCHTVKRDLMSTNCNC.

The protein belongs to the DNA polymerase type-B family. As to quaternary structure, heterotetramer. Consists of 4 subunits: POL2, DPB2, DPB3 and DPB4. [4Fe-4S] cluster serves as cofactor.

It localises to the nucleus. The catalysed reaction is DNA(n) + a 2'-deoxyribonucleoside 5'-triphosphate = DNA(n+1) + diphosphate. Functionally, DNA polymerase II participates in chromosomal DNA replication. This is DNA polymerase epsilon catalytic subunit A (POL2) from Candida glabrata (strain ATCC 2001 / BCRC 20586 / JCM 3761 / NBRC 0622 / NRRL Y-65 / CBS 138) (Yeast).